The chain runs to 423 residues: Histidine--tRNA ligase (423 aa).

This sequence belongs to the class-II aminoacyl-tRNA synthetase family. As to quaternary structure, homodimer.

Its subcellular location is the cytoplasm. The enzyme catalyses tRNA(His) + L-histidine + ATP = L-histidyl-tRNA(His) + AMP + diphosphate + H(+). The protein is Histidine--tRNA ligase of Desulfosudis oleivorans (strain DSM 6200 / JCM 39069 / Hxd3) (Desulfococcus oleovorans).